We begin with the raw amino-acid sequence, 130 residues long: Small ribosomal subunit protein uS9 (130 aa).

The protein belongs to the universal ribosomal protein uS9 family.

This is Small ribosomal subunit protein uS9 from Stutzerimonas stutzeri (strain A1501) (Pseudomonas stutzeri).